We begin with the raw amino-acid sequence, 86 residues long: Exodeoxyribonuclease 7 small subunit (86 aa).

Residues Met1 to Ser26 form a disordered region.

This sequence belongs to the XseB family. Heterooligomer composed of large and small subunits.

Its subcellular location is the cytoplasm. The enzyme catalyses Exonucleolytic cleavage in either 5'- to 3'- or 3'- to 5'-direction to yield nucleoside 5'-phosphates.. Its function is as follows. Bidirectionally degrades single-stranded DNA into large acid-insoluble oligonucleotides, which are then degraded further into small acid-soluble oligonucleotides. The polypeptide is Exodeoxyribonuclease 7 small subunit (Helicobacter pylori (strain HPAG1)).